The following is a 490-amino-acid chain: Vacuolar amino acid transporter 7 (490 aa).

Topologically, residues 1-6 are cytoplasmic; sequence MEATSS. Residues 7–27 form a helical membrane-spanning segment; that stretch reads ALSSTANLVKTIVGAGTLAIP. Residues 28–34 are Vacuolar-facing; that stretch reads YSFKSDG. Residues 35–55 form a helical membrane-spanning segment; the sequence is VLVGVILTLLAAVTSGLGLFV. Residues 56–84 are Cytoplasmic-facing; the sequence is LSKCSKTLINPRNSSFFTLCMLTYPTLAP. The chain crosses the membrane as a helical span at residues 85–105; that stretch reads IFDLAMIVQCFGVGLSYLVLI. The Vacuolar segment spans residues 106–108; that stretch reads GDL. Residues 109–129 traverse the membrane as a helical segment; that stretch reads FPGLFGGERNYWIIASAVIII. The Cytoplasmic segment spans residues 130 to 143; it reads PLCLVKKLDQLKYS. A helical transmembrane segment spans residues 144-164; sequence SILGLFALAYISILVFSHFVF. The Vacuolar portion of the chain corresponds to 165 to 190; sequence ELGKGELTNILRNDICWWKIHDFKGL. The chain crosses the membrane as a helical span at residues 191 to 211; sequence LSTFSIIIFAFTGSMNLFPMI. Residues 212-221 are Cytoplasmic-facing; that stretch reads NELKDNSMEN. The helical transmembrane segment at 222–242 threads the bilayer; it reads ITFVINNSISLSTALFLIVGL. Residues 243–264 are Vacuolar-facing; that stretch reads SGYLTFGNETLGNLMLNYDPNS. A helical membrane pass occupies residues 265-285; the sequence is IWIVIGKFCLGSMLILSFPLL. Residues 286 to 397 are Cytoplasmic-facing; that stretch reads FHPLRIAVNN…FVKSRFYWIT (112 aa). The interval 355–374 is disordered; that stretch reads NGNFDNGSIESQENNNDERG. Over residues 357–368 the composition is skewed to polar residues; that stretch reads NFDNGSIESQEN. A helical transmembrane segment spans residues 398–418; that stretch reads ALLLISMYTLALSVQSFALVL. The Vacuolar portion of the chain corresponds to 419–428; sequence SFVGATGSTS. The helical transmembrane segment at 429–449 threads the bilayer; that stretch reads ISFTLPGLLGYKLIGLDSLAI. Residues 450–463 are Cytoplasmic-facing; it reads GKMIPPKDRFYKRC. A helical membrane pass occupies residues 464–484; sequence SLLLVFYGLSVMFLSLYVTVF. Topologically, residues 485–490 are vacuolar; the sequence is NRSDEA.

This sequence belongs to the amino acid/polyamine transporter 2 family.

The protein localises to the vacuole membrane. In terms of biological role, probable amino acid transporter of unknown specificity. The protein is Vacuolar amino acid transporter 7 (AVT7) of Saccharomyces cerevisiae (strain ATCC 204508 / S288c) (Baker's yeast).